The sequence spans 772 residues: Endoplasmic reticulum membrane sensor NFE2L1 (772 aa).

The helical; Signal-anchor for type II membrane protein transmembrane segment at 7–24 threads the bilayer; sequence YFTEGLIQFTILLSLIGV. Positions 191–199 are cholesterol recognition/amino acid consensus (CRAC) region; it reads IFDYSHRQK. Residues 198–216 are compositionally biased toward basic and acidic residues; it reads QKESEVDKELSDGRERGDG. The interval 198 to 223 is disordered; the sequence is QKESEVDKELSDGRERGDGWRSAGGQ. N-linked (GlcNAc...) asparagine glycans are attached at residues N332, N340, N362, N402, N407, N414, N425, and N429. The segment at 472-531 is disordered; that stretch reads EEEFDSDSGLSLDSGHSPASLSSSEASSSSSSSSSSSSSSSSSSSSFSEEGAVGYSSDSE. Residues 478 to 519 show a composition bias toward low complexity; the sequence is DSGLSLDSGHSPASLSSSEASSSSSSSSSSSSSSSSSSSSFS. N574 carries an N-linked (GlcNAc...) asparagine glycan. Positions 581-613 are disordered; it reads PGTLDPEEPKLPSVGKKSSKEKPSEFLDKQMSR. The segment covering 598–613 has biased composition (basic and acidic residues); the sequence is SSKEKPSEFLDKQMSR. Residues 654–717 enclose the bZIP domain; it reads LIRDIRRRGK…RQMKQKVQNL (64 aa). The tract at residues 656 to 675 is basic motif; the sequence is RDIRRRGKNKMAAQNCRKRK. The segment at 682-696 is leucine-zipper; the sequence is LERDVEDLQRDKSKL. The Nuclear localization signal signature appears at 761–768; sequence RRQERKQK.

The protein belongs to the bZIP family. CNC subfamily. As to quaternary structure, interacts (via the bZIP domain) with small MAF protein (MAFF, MAFG or MAFK); required for binding to antioxidant response elements (AREs) on DNA. In terms of processing, cleaved at Leu-104 following retrotranslocation, releasing the protein from the endoplasmic reticulum membrane and forming the transcription factor NRF1 that translocates into the nucleus.

It is found in the endoplasmic reticulum membrane. The protein resides in the nucleus. Its function is as follows. Endoplasmic reticulum membrane sensor that translocates into the nucleus in response to various stresses to act as a transcription factor. Constitutes a precursor of the transcription factor NRF1. Able to detect various cellular stresses, such as cholesterol excess, oxidative stress or proteasome inhibition. In response to stress, it is released from the endoplasmic reticulum membrane following cleavage and translocates into the nucleus to form the transcription factor NRF1. Acts as a key sensor of cholesterol excess: in excess cholesterol conditions, the endoplasmic reticulum membrane form of the protein directly binds cholesterol via its CRAC motif, preventing cleavage and release of the transcription factor NRF1, thereby allowing expression of genes promoting cholesterol removal. Involved in proteasome homeostasis: in response to proteasome inhibition, it is released from the endoplasmic reticulum membrane, translocates to the nucleus and activates expression of genes encoding proteasome subunits. In terms of biological role, CNC-type bZIP family transcription factor that translocates to the nucleus and regulates expression of target genes in response to various stresses. Heterodimerizes with small-Maf proteins (MAFF, MAFG or MAFK) and binds DNA motifs including the antioxidant response elements (AREs), which regulate expression of genes involved in oxidative stress response. Activates or represses expression of target genes, depending on the context. Plays a key role in cholesterol homeostasis by acting as a sensor of cholesterol excess: in low cholesterol conditions, translocates into the nucleus and represses expression of genes involved in defense against cholesterol excess. In excess cholesterol conditions, the endoplasmic reticulum membrane form of the protein directly binds cholesterol via its CRAC motif, preventing cleavage and release of the transcription factor NRF1, thereby allowing expression of genes promoting cholesterol removal. Critical for redox balance in response to oxidative stress: acts by binding the AREs motifs on promoters and mediating activation of oxidative stress response genes. Involved in proteasome homeostasis: in response to proteasome inhibition, mediates the 'bounce-back' of proteasome subunits by translocating into the nucleus and activating expression of genes encoding proteasome subunits. The chain is Endoplasmic reticulum membrane sensor NFE2L1 from Gallus gallus (Chicken).